A 434-amino-acid polypeptide reads, in one-letter code: Probable phosphatidylinositol 3,4,5-trisphosphate 3-phosphatase TEP1 (434 aa).

One can recognise a Phosphatase tensin-type domain in the interval 33-255 (KTKNDIGLRL…RYHEFFITHE (223 aa)). Catalysis depends on Cys-193, which acts as the Phosphocysteine intermediate.

The catalysed reaction is a 1,2-diacyl-sn-glycero-3-phospho-(1D-myo-inositol-3,4,5-trisphosphate) + H2O = a 1,2-diacyl-sn-glycero-3-phospho-(1D-myo-inositol-4,5-bisphosphate) + phosphate. Its function is as follows. May act as a phosphoinositide 3-phosphatase by regulating PtdIns(3,4,5)P3 levels. This chain is Probable phosphatidylinositol 3,4,5-trisphosphate 3-phosphatase TEP1 (TEP1), found in Saccharomyces cerevisiae (strain ATCC 204508 / S288c) (Baker's yeast).